Here is a 660-residue protein sequence, read N- to C-terminus: Peroxisomal acyl-coenzyme A oxidase 1 (660 aa).

Position 26 is a phosphoserine (Ser26). N6-succinyllysine occurs at positions 89 and 90. FAD contacts are provided by Thr139 and Gly178. An N6-acetyllysine modification is found at Lys216. Lys241 carries the N6-succinyllysine modification. N6-acetyllysine is present on residues Lys255, Lys267, and Lys272. The residue at position 349 (Lys349) is an N6-succinyllysine. The active-site Proton acceptor is the Glu421. Lys437 and Lys446 each carry N6-acetyllysine; alternate. 2 positions are modified to N6-succinyllysine; alternate: Lys437 and Lys446. Lys500 is modified (N6-acetyllysine). The residue at position 512 (Lys512) is an N6-acetyllysine; alternate. Position 512 is an N6-succinyllysine; alternate (Lys512). Residue Lys542 is modified to N6-succinyllysine. Lys637 carries the N6-acetyllysine; alternate modification. Lys637 is subject to N6-succinyllysine; alternate. An N6-succinyllysine modification is found at Lys643. The residue at position 649 (Ser649) is a Phosphoserine. N6-acetyllysine is present on Lys651. The residue at position 654 (Lys654) is an N6-succinyllysine. The Microbody targeting signal motif lies at 658–660 (SKL).

This sequence belongs to the acyl-CoA oxidase family. Homodimer. Interacts with LONP2. Requires FAD as cofactor.

It is found in the peroxisome. It catalyses the reaction a 2,3-saturated acyl-CoA + O2 = a (2E)-enoyl-CoA + H2O2. The enzyme catalyses hexadecanoyl-CoA + O2 = (2E)-hexadecenoyl-CoA + H2O2. It carries out the reaction dodecanoyl-CoA + O2 = (2E)-dodecenoyl-CoA + H2O2. The catalysed reaction is octanoyl-CoA + O2 = (2E)-octenoyl-CoA + H2O2. It catalyses the reaction decanoyl-CoA + O2 = (2E)-decenoyl-CoA + H2O2. The enzyme catalyses tetradecanoyl-CoA + O2 = (2E)-tetradecenoyl-CoA + H2O2. It carries out the reaction hexadecanedioyl-CoA + O2 = (2E)-hexadecenedioyl-CoA + H2O2. The catalysed reaction is tetracosanoyl-CoA + O2 = (2E)-tetracosenoyl-CoA + H2O2. It catalyses the reaction glutaryl-CoA + O2 = (2E)-glutaconyl-CoA + H2O2. The enzyme catalyses hexanoyl-CoA + O2 = (2E)-hexenoyl-CoA + H2O2. It carries out the reaction octadecanoyl-CoA + O2 = (2E)-octadecenoyl-CoA + H2O2. The catalysed reaction is (5Z,8Z,11Z,14Z,17Z)-eicosapentaenoyl-CoA + O2 = (2E,5Z,8Z,11Z,14Z,17Z)-icosahexaenoyl-CoA + H2O2. It catalyses the reaction (6Z,9Z,12Z,15Z,18Z,21Z)-tetracosahexaenoyl-CoA + O2 = (2E,6Z,9Z,12Z,15Z,18Z,21Z)-tetracosaheptaenoyl-CoA + H2O2. Its pathway is lipid metabolism; peroxisomal fatty acid beta-oxidation. Functionally, involved in the initial and rate-limiting step of peroxisomal beta-oxidation of straight-chain saturated and unsaturated very-long-chain fatty acids. Catalyzes the desaturation of fatty acyl-CoAs such as palmitoyl-CoA (hexadecanoyl-CoA) to 2-trans-enoyl-CoAs ((2E)-enoyl-CoAs) such as (2E)-hexadecenoyl-CoA, and donates electrons directly to molecular oxygen (O(2)), thereby producing hydrogen peroxide (H(2)O(2)). In terms of biological role, shows highest activity against medium-chain fatty acyl-CoAs. Shows optimum activity with a chain length of 10 carbons (decanoyl-CoA) in vitro. Is active against a much broader range of substrates and shows activity towards long-chain acyl-CoAs. This is Peroxisomal acyl-coenzyme A oxidase 1 from Pongo abelii (Sumatran orangutan).